Here is a 279-residue protein sequence, read N- to C-terminus: Plasmodesmata-located protein 8 (279 aa).

An N-terminal signal peptide occupies residues 1 to 20 (MRRLFLFSLLFLFFYSSSSS). Residues 21 to 253 (RSSSESHIFI…PTNGDHVGKS (233 aa)) are Extracellular-facing. Gnk2-homologous domains lie at 27 to 135 (HIFI…TNDF) and 137 to 237 (GKPD…GSGY). Cystine bridges form between Cys34–Cys113, Cys89–Cys98, Cys101–Cys126, Cys148–Cys215, Cys191–Cys200, and Cys203–Cys228. Residues 254–274 (IAIIVGVIAGFAILVVLLSLC) form a helical membrane-spanning segment. Residues 254–274 (IAIIVGVIAGFAILVVLLSLC) are necessary and sufficient for plasmodesmal targeting. Over 275 to 279 (RNSMH) the chain is Cytoplasmic.

This sequence belongs to the cysteine-rich repeat secretory protein family. Plasmodesmata-located proteins (PDLD) subfamily. Interacts with ACBP6; interaction occurs at the plasma membrane. In terms of assembly, (Microbial infection) Interacts with Grapevine fanleaf virus (GFLV) 2B-MP. In terms of tissue distribution, highly expressed in pollen, lateral root and elongation zone. Higher expression in the reproductive tissues (flowers and buds) than in vegetative organs (leaves and stems). High expression in shoot and root phloem companion cells (at protein level).

The protein resides in the cell membrane. It localises to the cell junction. Its subcellular location is the plasmodesma. Its function is as follows. Modulates cell-to-cell trafficking. The sequence is that of Plasmodesmata-located protein 8 from Arabidopsis thaliana (Mouse-ear cress).